The primary structure comprises 371 residues: MAELQEVQITEEKPLLPGQTPEAAKEAELAARILLDQGQTHSVETPYGSVTFTVYGTPKPKRPAILTYHDVGLNYKSCFQPLFQFEDMQEIIQNFVRVHVDAPGMEEGAPVFPLGYQYPSLDQLADMIPCVLQYLNFSTIIGVGVGAGAYILARYALNHPDTVEGLVLINIDPNAKGWMDWAAHKLTGLTSSIPEMILGHLFSQEELSGNSELIQKYRNIITHAPNLDNIELYWNSYNNRRDLNFERGGDITLKCPVMLVVGDQAPHEDAVVECNSKLDPTQTSFLKMADSGGQPQLTQPGKLTEAFKYFLQGMGYMASSCMTRLSRSRTASLTSAASVDGNRSRSRTLSQSSESGTLSSGPPGHTMEVSC.

Positions 1–21 are disordered; sequence MAELQEVQITEEKPLLPGQTP. A2 is modified (N-acetylalanine). T20 bears the Phosphothreonine mark. A phosphoserine mark is found at S326 and S328. Residue T330 is modified to Phosphothreonine. S332 carries the phosphoserine modification. Position 334 is a phosphothreonine (T334). Residues 334-371 are disordered; it reads TSAASVDGNRSRSRTLSQSSESGTLSSGPPGHTMEVSC. A phosphoserine mark is found at S335, S338, and S344. The span at 347 to 361 shows a compositional bias: low complexity; it reads RTLSQSSESGTLSSG. T348 is subject to Phosphothreonine. Phosphoserine occurs at positions 350, 352, 353, and 355. At T357 the chain carries Phosphothreonine. S370 bears the Phosphoserine mark.

It belongs to the NDRG family. In terms of assembly, interacts with CTNNB1.

Its subcellular location is the cytoplasm. It localises to the perinuclear region. The protein resides in the cell projection. The protein localises to the growth cone. Its function is as follows. Contributes to the regulation of the Wnt signaling pathway. Down-regulates CTNNB1-mediated transcriptional activation of target genes, such as CCND1, and may thereby act as tumor suppressor. May be involved in dendritic cell and neuron differentiation. In Pongo abelii (Sumatran orangutan), this protein is Protein NDRG2 (NDRG2).